The sequence spans 421 residues: UDP-N-acetylglucosamine 1-carboxyvinyltransferase (421 aa).

22–23 (KN) lines the phosphoenolpyruvate pocket. Residue arginine 93 participates in UDP-N-acetyl-alpha-D-glucosamine binding. Catalysis depends on cysteine 117, which acts as the Proton donor. Cysteine 117 is subject to 2-(S-cysteinyl)pyruvic acid O-phosphothioketal. Residues 122 to 126 (RPVDL), aspartate 308, and isoleucine 330 contribute to the UDP-N-acetyl-alpha-D-glucosamine site.

The protein belongs to the EPSP synthase family. MurA subfamily.

It localises to the cytoplasm. It carries out the reaction phosphoenolpyruvate + UDP-N-acetyl-alpha-D-glucosamine = UDP-N-acetyl-3-O-(1-carboxyvinyl)-alpha-D-glucosamine + phosphate. Its pathway is cell wall biogenesis; peptidoglycan biosynthesis. In terms of biological role, cell wall formation. Adds enolpyruvyl to UDP-N-acetylglucosamine. The sequence is that of UDP-N-acetylglucosamine 1-carboxyvinyltransferase from Pseudomonas putida (strain W619).